A 454-amino-acid chain; its full sequence is L-cysteine desulfhydrase-like protein lolT1 (454 aa).

An N6-(pyridoxal phosphate)lysine modification is found at Lys-227.

It belongs to the class-V pyridoxal-phosphate-dependent aminotransferase family. Pyridoxal 5'-phosphate serves as cofactor.

It functions in the pathway alkaloid biosynthesis. L-cysteine desulfhydrase-like protein; part of the gene cluster that mediates the biosynthesis of loline alkaloids, potent insecticidal agents composed of a pyrrolizidine ring system and an uncommon ether bridge linking carbons 2 and 7. Lolines are structurally differentiated by the various modifications of the L-amino group and include norloline, loline, N-methylloline, N-acetylloline, N-acetylnorloline, and N-formylloline. The first committed step is the condensation of O-acetyl-L-homoserine (derived from L-aspartic acid) and L-proline, probably catalyzed by the gamma-type pyridoxal 5'-phosphate(PLP)-dependent enzyme lolC, to give the diamino diacid, NACPP. Ensuing cyclization, decarboxylation, and acetylation steps yield 1-exo-acetamidopyrrolizidine (AcAP). LolO is required for installation of the ether bridge upon the pathway intermediate, 1-exo-acetamidopyrrolizidine (AcAP). In sequential 2-oxoglutarate- and O(2)-consuming steps, lolO removes hydrogens from C2 and C7 of AcAP to form both carbon-oxygen bonds in N-acetylnorloline (NANL), the precursor to all other lolines. The enzymes lolD, lolE, lolF and lolT have also been proposed to be involved in the ether-bridge installation. Further processing of the exocyclic moiety of NANL by fungal N-acetamidase (LolN), methyltransferase (LolM), and cytochrome P450 (LolP) enzymes, with occasional involvement of a plant acetyltransferase, generates the other known lolines. LolN transforms NANL to norlonine which is monomethylated and dimethylated to respectively lonine and N-methyllonine (NML) by lolM. LolP catalyzes hydroxylation of the methyl group in N-methylloline (NML) and further oxygenation to N-formylloline (NFL). A plant acetyltransferase is responsible for the acetylation of loline to form N-acetylloline (NAL). LolA might interact with aspartate kinase to prevent feedback inhibition of its activity by these end products and thereby promote production of L-homoserine from L-aspartate. This is L-cysteine desulfhydrase-like protein lolT1 from Epichloe uncinata (Endophyte fungus).